Here is a 1350-residue protein sequence, read N- to C-terminus: ABC transporter C family member 13 (1350 aa).

Positions 107-390 (NKKSIFIVIL…LPEAIHNLLG (284 aa)) constitute an ABC transmembrane type-1 1 domain. A run of 4 helical transmembrane segments spans residues 111–131 (IFIV…LKYF), 143–163 (TFLT…SYTL), 215–235 (IGLF…FPIQ), and 240–260 (LALL…VMII). Positions 462–481 (EKSEEEYETTTTTTDDNNNN) are disordered. The segment covering 470 to 481 (TTTTTTDDNNNN) has biased composition (low complexity). One can recognise an ABC transporter 1 domain in the interval 473 to 693 (TTTDDNNNNN…IDFESIMKTK (221 aa)). Residue 505–512 (GVVGSGKT) participates in ATP binding. In terms of domain architecture, ABC transmembrane type-1 2 spans 774 to 1061 (KHGSSTFFFI…FVELEVKMNS (288 aa)). 6 helical membrane-spanning segments follow: residues 776–796 (GSST…QAIF), 816–836 (DSFY…TLVI), 887–907 (IDLL…TVVF), 909–929 (ICVM…LIIV), 1003–1023 (IGVR…FFSL), and 1029–1049 (GFSV…NWAV). Positions 1103–1337 (IEFRDVEIRY…KNSKFSKLVK (235 aa)) constitute an ABC transporter 2 domain. 1137-1144 (GRTGAGKS) serves as a coordination point for ATP.

This sequence belongs to the ABC transporter superfamily. ABCC family. Conjugate transporter (TC 3.A.1.208) subfamily.

The protein resides in the membrane. This chain is ABC transporter C family member 13 (abcC13), found in Dictyostelium discoideum (Social amoeba).